Here is a 338-residue protein sequence, read N- to C-terminus: Putative clathrin assembly protein At5g10410 (338 aa).

The region spanning 27-157 is the ENTH domain; it reads FGSTAVKYIH…WVPKVLGSFP (131 aa).

It is found in the membrane. It localises to the clathrin-coated pit. The protein localises to the golgi apparatus. Its subcellular location is the cytoplasmic vesicle. The protein resides in the clathrin-coated vesicle. The chain is Putative clathrin assembly protein At5g10410 from Arabidopsis thaliana (Mouse-ear cress).